The sequence spans 372 residues: MSNQHTLLMSNLLPVGSNISTWWNFGSMLLTCLMLQITTGFFLAIHYTANINLAFSSVIHITRDVPYGWIMQNLHAISASMFFICIYIHIARGLYYGLYLNKEVWLSGTALLITLMATAFFGYVLPWGQMSFWAATVITNLLTAIPYLGTMLTTWLWGGFSINDPTLTRFFALHFILPFAIMALSSIHIILLHNEGSNNPLGTNSDIDKIPFHPYHSYKDMLMFTSMITLLFITLSFSPDLLNYPENFSKANPLVTPQHIKPEWYFLFAYGILRSIPNKLGGALALLMSVMILTTVPFTHTSYTRSMMFRPLSQILFWTLMATFITITWTASKPVEPPFISISQTTSIFYFSFFITIPLLGWTENKIMMMNN.

The next 4 helical transmembrane spans lie at 25–45, 69–90, 105–125, and 170–190; these read FGSM…FLAI, WIMQ…YIHI, WLSG…GYVL, and FFAL…IHII. Heme b-binding residues include His-75 and His-89. Heme b is bound by residues His-174 and His-188. His-193 contributes to the a ubiquinone binding site. The next 4 helical transmembrane spans lie at 218–238, 280–300, 312–332, and 339–358; these read YKDM…LSFS, LGGA…PFTH, LSQI…WTAS, and FISI…ITIP.

Belongs to the cytochrome b family. As to quaternary structure, the cytochrome bc1 complex contains 3 respiratory subunits (MT-CYB, CYC1 and UQCRFS1), 2 core proteins (UQCRC1 and UQCRC2) and probably 6 low-molecular weight proteins. The cofactor is heme b.

The protein resides in the mitochondrion inner membrane. In terms of biological role, component of the ubiquinol-cytochrome c reductase complex (complex III or cytochrome b-c1 complex) that is part of the mitochondrial respiratory chain. The b-c1 complex mediates electron transfer from ubiquinol to cytochrome c. Contributes to the generation of a proton gradient across the mitochondrial membrane that is then used for ATP synthesis. This chain is Cytochrome b (MT-CYB), found in Naja annulata annulata (Banded water cobra).